Here is an 856-residue protein sequence, read N- to C-terminus: DNA mismatch repair protein MutS (856 aa).

618–625 (GPNMGGKS) lines the ATP pocket.

This sequence belongs to the DNA mismatch repair MutS family.

This protein is involved in the repair of mismatches in DNA. It is possible that it carries out the mismatch recognition step. This protein has a weak ATPase activity. The chain is DNA mismatch repair protein MutS from Shewanella putrefaciens (strain CN-32 / ATCC BAA-453).